The primary structure comprises 1014 residues: Klotho (1014 aa).

The signal sequence occupies residues 1–34 (MPARAPPRRLPRLLLLRLLSLHLLLLTLRARCLS). The Extracellular portion of the chain corresponds to 35 to 983 (AEPGQGAQTW…GCGFFQTRKS (949 aa)). 2 glycosyl hydrolase-1 regions span residues 59-508 (LHDT…NNGF) and 517-955 (LEGT…NNGF). Asn161, Asn285, Asn346, Asn609, Asn614, and Asn696 each carry an N-linked (GlcNAc...) asparagine glycan. Residues 984 to 1004 (LLAFISFLVFAFVTSLALIYY) form a helical membrane-spanning segment. At 1005-1014 (YSKKGRRRYK) the chain is on the cytoplasmic side.

This sequence belongs to the glycosyl hydrolase 1 family. Klotho subfamily. Homodimer. Interacts with FGF23 and FGFR1. Post-translationally, N-glycosylated. As to expression, present in cortical renal tubules and the parathyroid (at protein level). Strongly expressed in kidney. Expressed at low levels in brain, lung, intestine and ovaries.

It localises to the cell membrane. The protein resides in the apical cell membrane. It is found in the secreted. It catalyses the reaction a beta-D-glucuronoside + H2O = D-glucuronate + an alcohol. Functionally, may have weak glycosidase activity towards glucuronylated steroids. However, it lacks essential active site Glu residues at positions 241 and 874, suggesting it may be inactive as a glycosidase in vivo. May be involved in the regulation of calcium and phosphorus homeostasis by inhibiting the synthesis of active vitamin D. Essential factor for the specific interaction between FGF23 and FGFR1. Its function is as follows. The Klotho peptide generated by cleavage of the membrane-bound isoform may be an anti-aging circulating hormone which would extend life span by inhibiting insulin/IGF1 signaling. This chain is Klotho (Kl), found in Rattus norvegicus (Rat).